The following is an 81-amino-acid chain: Photosystem I iron-sulfur center (81 aa).

2 4Fe-4S ferredoxin-type domains span residues Ser-2–Trp-31 and Ile-39–Tyr-68. Cys-11, Cys-14, Cys-17, Cys-21, Cys-48, Cys-51, Cys-54, and Cys-58 together coordinate [4Fe-4S] cluster.

In terms of assembly, the cyanobacterial PSI reaction center is composed of one copy each of PsaA,B,C,D,E,F,I,J,K,L,M and X, and forms trimeric complexes. It depends on [4Fe-4S] cluster as a cofactor.

The protein resides in the cellular thylakoid membrane. It catalyses the reaction reduced [plastocyanin] + hnu + oxidized [2Fe-2S]-[ferredoxin] = oxidized [plastocyanin] + reduced [2Fe-2S]-[ferredoxin]. Apoprotein for the two 4Fe-4S centers FA and FB of photosystem I (PSI); essential for photochemical activity. FB is the terminal electron acceptor of PSI, donating electrons to ferredoxin. The C-terminus interacts with PsaA/B/D and helps assemble the protein into the PSI complex. Required for binding of PsaD and PsaE to PSI. PSI is a plastocyanin/cytochrome c6-ferredoxin oxidoreductase, converting photonic excitation into a charge separation, which transfers an electron from the donor P700 chlorophyll pair to the spectroscopically characterized acceptors A0, A1, FX, FA and FB in turn. In Microchaete diplosiphon (Fremyella diplosiphon), this protein is Photosystem I iron-sulfur center.